The primary structure comprises 408 residues: UDP-N-acetylglucosamine--dolichyl-phosphate N-acetylglucosaminephosphotransferase (408 aa).

Residues 1–10 (MWAFPELPLP) are Lumenal-facing. Residues 11 to 38 (LLVNLFGSLLGFVATVTLIPAFRSHFIA) form a helical membrane-spanning segment. Over 39–58 (ARLCGQDLNKLSRQQIPESQ) the chain is Cytoplasmic. UDP-N-acetyl-alpha-D-glucosamine contacts are provided by residues 44–46 (QDL) and Glu56. A helical transmembrane segment spans residues 59–78 (GVICGAVFLIILFCFIPFPF). At 79-91 (LNCFVEEQCKAFP) the chain is on the lumenal side. A helical transmembrane segment spans residues 92–118 (HHEFVALIGALLAICCMIFLGFADDVL). At 119 to 121 (NLR) the chain is on the cytoplasmic side. Residues 122 to 143 (WRHKLLLPTAASLPLLMVYFTN) traverse the membrane as a helical segment. Position 125 (Lys125) interacts with dolichyl phosphate. Residues 144–166 (FGNTTIVVPKPFRWILGLHLDLG) lie on the Lumenal side of the membrane. Asn146 carries N-linked (GlcNAc...) asparagine glycosylation. A helical transmembrane segment spans residues 167 to 186 (ILYYVYMGLLAVFCTNAINI). Position 178–186 (178–186 (VFCTNAINI)) interacts with dolichyl phosphate. Asn185 provides a ligand contact to Mg(2+). The Cytoplasmic segment spans residues 187–192 (LAGING). Asn191 serves as a coordination point for UDP-N-acetyl-alpha-D-glucosamine. A helical transmembrane segment spans residues 193 to 213 (LEAGQSLVISASIIVFNLVEL). At 214 to 218 (EGDYR) the chain is on the lumenal side. The chain crosses the membrane as a helical span at residues 219 to 242 (DDHVFSLYFMIPFFFTTLGLLYHN). At 243 to 250 (WYPSQVFV) the chain is on the cytoplasmic side. The helical transmembrane segment at 251-269 (GDTFCYFAGMTFAVVGILG) threads the bilayer. A Mg(2+)-binding site is contributed by Asp252. Residues 270–271 (HF) lie on the Lumenal side of the membrane. Residues 272 to 293 (SKTMLLFFIPQVFNFLYSLPQL) form a helical membrane-spanning segment. The Cytoplasmic segment spans residues 294–375 (LHAIPCPRHR…LLLKIFGPIH (82 aa)). 301–303 (RHR) provides a ligand contact to UDP-N-acetyl-alpha-D-glucosamine. The helical transmembrane segment at 376–400 (ERNLTLLLLLLQILSSAVTFSIRYQ) threads the bilayer. The Lumenal portion of the chain corresponds to 401-408 (LVRLFYDV).

It belongs to the glycosyltransferase 4 family. As to quaternary structure, homodimer. Requires Mg(2+) as cofactor.

It is found in the endoplasmic reticulum membrane. The catalysed reaction is a di-trans,poly-cis-dolichyl phosphate + UDP-N-acetyl-alpha-D-glucosamine = an N-acetyl-alpha-D-glucosaminyl-diphospho-di-trans,poly-cis-dolichol + UMP. The protein operates within protein modification; protein glycosylation. Inhibited by natural nucleoside antibiotic tunicamycin, which acts as a structural analog and competitor of UDP-GlcNAc. Its function is as follows. UDP-N-acetylglucosamine--dolichyl-phosphate N-acetylglucosaminephosphotransferase that operates in the biosynthetic pathway of dolichol-linked oligosaccharides, the glycan precursors employed in protein asparagine (N)-glycosylation. The assembly of dolichol-linked oligosaccharides begins on the cytosolic side of the endoplasmic reticulum membrane and finishes in its lumen. The sequential addition of sugars to dolichol pyrophosphate produces dolichol-linked oligosaccharides containing fourteen sugars, including two GlcNAcs, nine mannoses and three glucoses. Once assembled, the oligosaccharide is transferred from the lipid to nascent proteins by oligosaccharyltransferases. Catalyzes the initial step of dolichol-linked oligosaccharide biosynthesis, transfering GlcNAc-1-P from cytosolic UDP-GlcNAc onto the carrier lipid dolichyl phosphate (P-dolichol), yielding GlcNAc-P-P-dolichol embedded in the cytoplasmic leaflet of the endoplasmic reticulum membrane. This chain is UDP-N-acetylglucosamine--dolichyl-phosphate N-acetylglucosaminephosphotransferase (DPAGT1), found in Cricetulus griseus (Chinese hamster).